Reading from the N-terminus, the 201-residue chain is Inosine triphosphate pyrophosphatase (201 aa).

Position 16–21 (16–21) interacts with ITP; it reads TGNAKK. Mg(2+) is bound at residue Glu-44. Residues Lys-56, 72-73, Lys-89, 148-151, Lys-171, and 176-177 contribute to the ITP site; these read DT, FGWD, and HR.

This sequence belongs to the HAM1 NTPase family. Homodimer. Mg(2+) serves as cofactor. Mn(2+) is required as a cofactor.

It is found in the cytoplasm. The catalysed reaction is ITP + H2O = IMP + diphosphate + H(+). The enzyme catalyses dITP + H2O = dIMP + diphosphate + H(+). It catalyses the reaction XTP + H2O = XMP + diphosphate + H(+). Its function is as follows. Pyrophosphatase that hydrolyzes non-canonical purine nucleotides such as inosine triphosphate (ITP), deoxyinosine triphosphate (dITP) or xanthosine 5'-triphosphate (XTP) to their respective monophosphate derivatives. The enzyme does not distinguish between the deoxy- and ribose forms. Probably excludes non-canonical purines from RNA and DNA precursor pools, thus preventing their incorporation into RNA and DNA and avoiding chromosomal lesions. The protein is Inosine triphosphate pyrophosphatase of Sorghum bicolor (Sorghum).